The sequence spans 440 residues: Ferredoxin--NADP reductase (440 aa).

In terms of domain architecture, CpcD-like spans 17–75 (SRVFVYEVVGMRQNEETDQTNYPIRKSGSVFIRVPYNRMNQEMQRITRLGGKIVSIQTV). The tract at residues 93 to 142 (ASSETAKSEGNGKATPVKTDSGAKGFAKPPAEEQLKKKDNKGNTMTQAKA) is disordered. A compositionally biased stretch (basic and acidic residues) spans 122–133 (PAEEQLKKKDNK). The region spanning 155–279 (NAPFIGKVIS…TGPVGKEMLL (125 aa)) is the FAD-binding FR-type domain. FAD-binding positions include 214–217 (RLYS), 235–237 (CVR), Tyr-241, 253–255 (VCS), and Thr-294. The NADP(+) site is built by Ser-217 and Arg-237. NADP(+) is bound by residues Thr-294, 330 to 331 (VP), 360 to 361 (SR), 370 to 374 (RMYIQ), 399 to 400 (GL), and Glu-438.

The protein belongs to the ferredoxin--NADP reductase type 1 family. The cofactor is FAD.

It is found in the cellular thylakoid membrane. The enzyme catalyses 2 reduced [2Fe-2S]-[ferredoxin] + NADP(+) + H(+) = 2 oxidized [2Fe-2S]-[ferredoxin] + NADPH. This is Ferredoxin--NADP reductase (petH) from Trichormus variabilis (strain ATCC 29413 / PCC 7937) (Anabaena variabilis).